Here is a 1670-residue protein sequence, read N- to C-terminus: Protein TASOR (1670 aa).

Residues Met-1–Lys-110 are disordered. Ala-2 is modified (N-acetylalanine). Residues Gln-67–Ser-78 are compositionally biased toward polar residues. Residue Ser-344 is modified to Phosphoserine. Lys-586 participates in a covalent cross-link: Glycyl lysine isopeptide (Lys-Gly) (interchain with G-Cter in SUMO2). A phosphoserine mark is found at Ser-633, Ser-636, Ser-673, and Ser-800. Residues Lys-823 and Lys-832 each participate in a glycyl lysine isopeptide (Lys-Gly) (interchain with G-Cter in SUMO2) cross-link. At Ser-843 the chain carries Phosphoserine. A Glycyl lysine isopeptide (Lys-Gly) (interchain with G-Cter in SUMO2) cross-link involves residue Lys-872. Residues Thr-921–Glu-947 form a disordered region. Ser-927, Ser-971, and Ser-979 each carry phosphoserine. The segment covering Ser-927 to Lys-938 has biased composition (basic and acidic residues). Phosphothreonine is present on residues Thr-982 and Thr-1049. Residue Ser-1103 is modified to Phosphoserine. Positions Glu-1532–Thr-1545 are enriched in basic and acidic residues. Disordered stretches follow at residues Glu-1532 to Ser-1558 and Phe-1638 to Lys-1670. Polar residues-rich tracts occupy residues Gln-1546–Ser-1558 and Lys-1659–Lys-1670. Ser-1552 bears the Phosphoserine mark.

The protein belongs to the TASOR family. In terms of assembly, component of the HUSH complex; at least composed of TASOR, PPHLN1 and MPHOSPH8. Interacts with MORC2; the interaction associateS MORC2 with the HUSH complex which recruits MORC2 to heterochromatic loci. Interacts with ZNF638; leading to recruitment of the HUSH complex to unintegrated retroviral DNA. Interacts with INPP5A, EML1, SV1L, GPSM2, ITGB3BP, CNTN1, ETFA, PSMD8, S100A10, MPHOSPH8, TMEM100, ALB, PARPBP, HCFC2, NCBP1 and SETDB1.

It localises to the nucleus. The protein localises to the chromosome. In terms of biological role, component of the HUSH complex, a multiprotein complex that mediates epigenetic repression. The HUSH complex is recruited to genomic loci rich in H3K9me3 and is required to maintain transcriptional silencing by promoting recruitment of SETDB1, a histone methyltransferase that mediates further deposition of H3K9me3, as well as MORC2. Also represses L1 retrotransposons in collaboration with MORC2 and, probably, SETDB1, the silencing is dependent of repressive epigenetic modifications, such as H3K9me3 mark. Silencing events often occur within introns of transcriptionally active genes, and lead to the down-regulation of host gene expression. The HUSH complex is also involved in the silencing of unintegrated retroviral DNA by being recruited by ZNF638: some part of the retroviral DNA formed immediately after infection remains unintegrated in the host genome and is transcriptionally repressed. Plays a crucial role in early embryonic development. Involved in the organization of spindle poles and spindle apparatus assembly during zygotic division. Plays an important role in maintaining epiblast fitness or potency. The protein is Protein TASOR of Homo sapiens (Human).